The sequence spans 144 residues: D-aminoacyl-tRNA deacylase (144 aa).

The Gly-cisPro motif, important for rejection of L-amino acids motif lies at Gly-136 to Pro-137.

This sequence belongs to the DTD family. In terms of assembly, homodimer.

Its subcellular location is the cytoplasm. It catalyses the reaction glycyl-tRNA(Ala) + H2O = tRNA(Ala) + glycine + H(+). The enzyme catalyses a D-aminoacyl-tRNA + H2O = a tRNA + a D-alpha-amino acid + H(+). In terms of biological role, an aminoacyl-tRNA editing enzyme that deacylates mischarged D-aminoacyl-tRNAs. Also deacylates mischarged glycyl-tRNA(Ala), protecting cells against glycine mischarging by AlaRS. Acts via tRNA-based rather than protein-based catalysis; rejects L-amino acids rather than detecting D-amino acids in the active site. By recycling D-aminoacyl-tRNA to D-amino acids and free tRNA molecules, this enzyme counteracts the toxicity associated with the formation of D-aminoacyl-tRNA entities in vivo and helps enforce protein L-homochirality. The protein is D-aminoacyl-tRNA deacylase of Vibrio cholerae serotype O1 (strain ATCC 39541 / Classical Ogawa 395 / O395).